Reading from the N-terminus, the 569-residue chain is Urease subunit alpha (569 aa).

In terms of domain architecture, Urease spans 131–569; sequence GGFDAHIHFI…LPLAQRYFMY (439 aa). Ni(2+)-binding residues include His136, His138, and Lys219. Residue Lys219 is modified to N6-carboxylysine. Residue His221 coordinates substrate. Residues His248 and His274 each contribute to the Ni(2+) site. His322 serves as the catalytic Proton donor. Residue Asp362 participates in Ni(2+) binding.

It belongs to the metallo-dependent hydrolases superfamily. Urease alpha subunit family. In terms of assembly, heterotrimer of UreA (gamma), UreB (beta) and UreC (alpha) subunits. Three heterotrimers associate to form the active enzyme. It depends on Ni cation as a cofactor. In terms of processing, carboxylation allows a single lysine to coordinate two nickel ions.

The protein localises to the cytoplasm. The enzyme catalyses urea + 2 H2O + H(+) = hydrogencarbonate + 2 NH4(+). The protein operates within nitrogen metabolism; urea degradation; CO(2) and NH(3) from urea (urease route): step 1/1. This Jannaschia sp. (strain CCS1) protein is Urease subunit alpha.